We begin with the raw amino-acid sequence, 298 residues long: MTRSSPKSILRRVAAHEGAPKILQVLKEDGAVIIRGFLNQNLFQKLNKEMEDELAKRPLICEHNGEWVSGLAGSQTRRLNQLPAFSPTFRQEILNHPLFHEICEPLFGTHGCDYWMNTATVVQIGPGNAAQSLHRDQELYPVFNPIGKDAPEALVNFFCALSTFTDENGATRVIPGSHQWDDFTTDVTRCVPQTIPAEMEAGDCLLFSGKTVHGGGANRSKDNVRRGMALGVQATYLTAEENYQHIPREIVESMTPLAQKMIHWRSSYCPGGAGLWQINGTELANEIGLKANQPKKTI.

Residues H134, D136, and H213 each coordinate Fe cation.

This sequence belongs to the PhyH family. As to quaternary structure, homodimer. The cofactor is Fe cation.

It catalyses the reaction aculene D + 2-oxoglutarate + O2 = aculene C + succinate + CO2 + H2O. It carries out the reaction aculene B + 2-oxoglutarate + O2 = aculene A + succinate + CO2 + H2O. Its pathway is secondary metabolite biosynthesis. In terms of biological role, dioxygenase; part of the gene cluster that mediates the biosynthesis of aculenes, a unique type of norsesquiterpenes that contain a nordaucane skeleton linked to an L-proline moiety and are of mixed biosynthetic origin. The pathway begins with the synthesis of dauca-4,7-diene by the terpene cyclase aneC using farnesyl pyrophosphate (FPP) as substrate. The cytochrome P450 monooxygenase aneF then performs the initial oxidation at C-12 of dauca-4,7-diene to yield asperaculane D. Asperaculane D is substrate of the cytochrome P450 monooxygenase aneD for C-10 hydroxylation to yield asperaculane E. The cytochrome P450 monooxygenase aneG then converts asperaculane E into aculene D via C-2 oxidation. The monomodular nonribosomal peptide synthase aneB adenylates L-proline and the thiohydrolase aneE transfers this activated L-proline derivative to aculenes D and C to produce respectively aculenes B and A. The dioxygenase aneA converts aculene D into aculene C, and aculene B into aculene A by introducing the 5,6-alkene moiety. Asperculanes A, B, C and F, as well as 14-prolyl asperculane C, might be shunt products of the pathway. This Aspergillus aculeatus (strain ATCC 16872 / CBS 172.66 / WB 5094) protein is Dioxygenase aneA.